Reading from the N-terminus, the 264-residue chain is Energy-coupling factor transporter ATP-binding protein EcfA1 (264 aa).

Residues 2-234 form the ABC transporter domain; that stretch reads IQVENLSFSY…DEFNPFLIKI (233 aa). 34–41 serves as a coordination point for ATP; sequence GKNGSGKS.

Belongs to the ABC transporter superfamily. Energy-coupling factor EcfA family. Forms a stable energy-coupling factor (ECF) transporter complex composed of 2 membrane-embedded substrate-binding proteins (S component), 2 ATP-binding proteins (A component) and 2 transmembrane proteins (T component).

Its subcellular location is the cell inner membrane. Functionally, ATP-binding (A) component of a common energy-coupling factor (ECF) ABC-transporter complex. Unlike classic ABC transporters this ECF transporter provides the energy necessary to transport a number of different substrates. The chain is Energy-coupling factor transporter ATP-binding protein EcfA1 from Fusobacterium nucleatum subsp. nucleatum (strain ATCC 25586 / DSM 15643 / BCRC 10681 / CIP 101130 / JCM 8532 / KCTC 2640 / LMG 13131 / VPI 4355).